We begin with the raw amino-acid sequence, 473 residues long: 3-isopropylmalate dehydratase large subunit (473 aa).

[4Fe-4S] cluster is bound by residues Cys351, Cys414, and Cys417.

Belongs to the aconitase/IPM isomerase family. LeuC type 1 subfamily. Heterodimer of LeuC and LeuD. [4Fe-4S] cluster serves as cofactor.

It carries out the reaction (2R,3S)-3-isopropylmalate = (2S)-2-isopropylmalate. It functions in the pathway amino-acid biosynthesis; L-leucine biosynthesis; L-leucine from 3-methyl-2-oxobutanoate: step 2/4. Functionally, catalyzes the isomerization between 2-isopropylmalate and 3-isopropylmalate, via the formation of 2-isopropylmaleate. This is 3-isopropylmalate dehydratase large subunit from Acidovorax sp. (strain JS42).